The chain runs to 219 residues: GPI ethanolamine phosphate transferase, stabilizing subunit (219 aa).

Transmembrane regions (helical) follow at residues 11–31, 42–62, 86–106, 113–133, 155–175, and 189–209; these read YTHLLCIFSIILSVFIPSLFL, TWLCICSGFVTAVNLVLYLVV, YFLMSCFSFHVIFVLYGAPLI, FLFAVILSTFTTVPCLCLLGP, LQITTISSFVGAWLGALPIPL, and TLGATFGYVAGLVISPLWIYW.

It belongs to the PIGF family. Part of the ethanolamine phosphate transferase 3 complex composed by PIGO and PIGF. Part of the ethanolamine phosphate transferase 2 complex with PIGG. PIGF is required to stabilize PIGG and PIGO.

The protein resides in the endoplasmic reticulum membrane. It participates in glycolipid biosynthesis; glycosylphosphatidylinositol-anchor biosynthesis. Functionally, stabilizing subunit of the ethanolamine phosphate transferase 3 and ethanolamine phosphate transferase 2 complexes that sequentially transfer an ethanolamine phosphate (EtNP) from a phosphatidylethanolamine (PE) to the 6-OH position of the third alpha-1,2-linked mannose and the second alpha-1,6-linked mannose of the alpha-D-Man-(1-&gt;2)-alpha-D-Man-(1-&gt;6)-2-PEtn-alpha-D-Man-(1-&gt;4)-alpha-D-GlcN-(1-&gt;6)-(1-radyl,2-acyl-sn-glycero-3-phospho)-2-acyl-inositol (also termed H6) intermediate to generate a 6-PEtn-alpha-D-Man-(1-&gt;2)-6-PEtn-alpha-D-Man-(1-&gt;6)-2-PEtn-alpha-D-Man-(1-&gt;4)-alpha-D-GlcN-(1-&gt;6)-(1-radyl,2-acyl-sn-glycero-3-phospho)-2-acyl-inositol (also termed H8). Participates in the tenth and eleventh steps of the glycosylphosphatidylinositol-anchor biosynthesis, in association with PIGO and PIGG, respectively. The chain is GPI ethanolamine phosphate transferase, stabilizing subunit from Homo sapiens (Human).